The following is a 577-amino-acid chain: Arginine--tRNA ligase (577 aa).

Residues 122-132 (PNVAKEMHVGH) carry the 'HIGH' region motif.

It belongs to the class-I aminoacyl-tRNA synthetase family. As to quaternary structure, monomer.

The protein localises to the cytoplasm. It carries out the reaction tRNA(Arg) + L-arginine + ATP = L-arginyl-tRNA(Arg) + AMP + diphosphate. In Aliivibrio salmonicida (strain LFI1238) (Vibrio salmonicida (strain LFI1238)), this protein is Arginine--tRNA ligase.